We begin with the raw amino-acid sequence, 147 residues long: Small ribosomal subunit protein uS5 (147 aa).

The 64-residue stretch at Phe-9–Val-72 folds into the S5 DRBM domain.

Belongs to the universal ribosomal protein uS5 family. Part of the 30S ribosomal subunit. Contacts proteins S4 and S8.

In terms of biological role, with S4 and S12 plays an important role in translational accuracy. Its function is as follows. Located at the back of the 30S subunit body where it stabilizes the conformation of the head with respect to the body. The sequence is that of Small ribosomal subunit protein uS5 from Helicobacter pylori (strain J99 / ATCC 700824) (Campylobacter pylori J99).